A 550-amino-acid polypeptide reads, in one-letter code: Arginine--tRNA ligase (550 aa).

Positions 130–140 (ANPTGPIHIGG) match the 'HIGH' region motif.

The protein belongs to the class-I aminoacyl-tRNA synthetase family. In terms of assembly, monomer.

The protein resides in the cytoplasm. It carries out the reaction tRNA(Arg) + L-arginine + ATP = L-arginyl-tRNA(Arg) + AMP + diphosphate. The sequence is that of Arginine--tRNA ligase from Mycobacterium sp. (strain KMS).